Reading from the N-terminus, the 511-residue chain is uncharacterized protein (511 aa).

Residues 59–79 (VPVAANDDQPDGSRQSVRGRQ) form a disordered region.

This sequence belongs to the transposase 25 family.

This is an uncharacterized protein from Sinorhizobium fredii (strain NBRC 101917 / NGR234).